Consider the following 266-residue polypeptide: Glucosamine-6-phosphate deaminase (266 aa).

The active-site Proton acceptor; for enolization step is Asp72. Asp141 functions as the For ring-opening step in the catalytic mechanism. The active-site Proton acceptor; for ring-opening step is His143. Glu148 (for ring-opening step) is an active-site residue.

This sequence belongs to the glucosamine/galactosamine-6-phosphate isomerase family. NagB subfamily. Homohexamer.

The catalysed reaction is alpha-D-glucosamine 6-phosphate + H2O = beta-D-fructose 6-phosphate + NH4(+). It participates in amino-sugar metabolism; N-acetylneuraminate degradation; D-fructose 6-phosphate from N-acetylneuraminate: step 5/5. With respect to regulation, allosterically activated by N-acetylglucosamine 6-phosphate (GlcNAc6P). Its function is as follows. Catalyzes the reversible isomerization-deamination of glucosamine 6-phosphate (GlcN6P) to form fructose 6-phosphate (Fru6P) and ammonium ion. In Serratia proteamaculans (strain 568), this protein is Glucosamine-6-phosphate deaminase.